The sequence spans 319 residues: UDP-3-O-acylglucosamine N-acyltransferase (319 aa).

The active-site Proton acceptor is His-230.

The protein belongs to the transferase hexapeptide repeat family. LpxD subfamily. Homotrimer.

The enzyme catalyses a UDP-3-O-[(3R)-3-hydroxyacyl]-alpha-D-glucosamine + a (3R)-hydroxyacyl-[ACP] = a UDP-2-N,3-O-bis[(3R)-3-hydroxyacyl]-alpha-D-glucosamine + holo-[ACP] + H(+). The protein operates within bacterial outer membrane biogenesis; LPS lipid A biosynthesis. In terms of biological role, catalyzes the N-acylation of UDP-3-O-acylglucosamine using 3-hydroxyacyl-ACP as the acyl donor. Is involved in the biosynthesis of lipid A, a phosphorylated glycolipid that anchors the lipopolysaccharide to the outer membrane of the cell. The chain is UDP-3-O-acylglucosamine N-acyltransferase from Campylobacter lari (strain RM2100 / D67 / ATCC BAA-1060).